Consider the following 313-residue polypeptide: Ribosomal RNA small subunit methyltransferase H (313 aa).

S-adenosyl-L-methionine contacts are provided by residues 35–37 (GGY), aspartate 53, phenylalanine 80, aspartate 101, and glutamine 108.

It belongs to the methyltransferase superfamily. RsmH family.

The protein resides in the cytoplasm. The catalysed reaction is cytidine(1402) in 16S rRNA + S-adenosyl-L-methionine = N(4)-methylcytidine(1402) in 16S rRNA + S-adenosyl-L-homocysteine + H(+). Its function is as follows. Specifically methylates the N4 position of cytidine in position 1402 (C1402) of 16S rRNA. This Acidiphilium cryptum (strain JF-5) protein is Ribosomal RNA small subunit methyltransferase H.